The chain runs to 397 residues: Anhydro-N-acetylmuramic acid kinase (397 aa).

21-28 contacts ATP; it reads GTSLDGVD. A compositionally biased stretch (polar residues) spans 373 to 384; sequence TPTNLPSVTGAS. The segment at 373–397 is disordered; that stretch reads TPTNLPSVTGASARTPLGSLSVPGP.

The protein belongs to the anhydro-N-acetylmuramic acid kinase family.

It carries out the reaction 1,6-anhydro-N-acetyl-beta-muramate + ATP + H2O = N-acetyl-D-muramate 6-phosphate + ADP + H(+). It participates in amino-sugar metabolism; 1,6-anhydro-N-acetylmuramate degradation. Its pathway is cell wall biogenesis; peptidoglycan recycling. Catalyzes the specific phosphorylation of 1,6-anhydro-N-acetylmuramic acid (anhMurNAc) with the simultaneous cleavage of the 1,6-anhydro ring, generating MurNAc-6-P. Is required for the utilization of anhMurNAc either imported from the medium or derived from its own cell wall murein, and thus plays a role in cell wall recycling. This Salinibacter ruber (strain DSM 13855 / M31) protein is Anhydro-N-acetylmuramic acid kinase.